Here is an 863-residue protein sequence, read N- to C-terminus: FO synthase (863 aa).

2 consecutive Radical SAM core domains span residues 91-343 and 551-792; these read ITYS…APPN and VTFV…SHIQ. The tract at residues 92–424 is cofG-like; sequence TYSRKVFIPV…PRVRGHVVAL (333 aa). Positions 105, 109, 112, 565, 569, and 572 each coordinate [4Fe-4S] cluster. The tract at residues 528 to 861 is cofH-like; that stretch reads DGPALEAVTA…RQRTTTYALR (334 aa).

The protein in the N-terminal section; belongs to the radical SAM superfamily. CofG family. In the C-terminal section; belongs to the radical SAM superfamily. CofH family. It depends on [4Fe-4S] cluster as a cofactor.

It carries out the reaction 5-amino-6-(D-ribitylamino)uracil + L-tyrosine + S-adenosyl-L-methionine = 5-amino-5-(4-hydroxybenzyl)-6-(D-ribitylimino)-5,6-dihydrouracil + 2-iminoacetate + 5'-deoxyadenosine + L-methionine + H(+). It catalyses the reaction 5-amino-5-(4-hydroxybenzyl)-6-(D-ribitylimino)-5,6-dihydrouracil + S-adenosyl-L-methionine = 7,8-didemethyl-8-hydroxy-5-deazariboflavin + 5'-deoxyadenosine + L-methionine + NH4(+) + H(+). Its pathway is cofactor biosynthesis; coenzyme F0 biosynthesis. In terms of biological role, catalyzes the radical-mediated synthesis of 7,8-didemethyl-8-hydroxy-5-deazariboflavin (FO) from 5-amino-6-(D-ribitylamino)uracil and L-tyrosine. The polypeptide is FO synthase (fbiC) (Mycobacterium leprae (strain TN)).